We begin with the raw amino-acid sequence, 90 residues long: UPF0237 protein NMB1653 (90 aa).

Positions 5 to 83 constitute an ACT domain; the sequence is VITVIGKDRV…LDIRMQNEEI (79 aa).

Belongs to the UPF0237 family.

The sequence is that of UPF0237 protein NMB1653 from Neisseria meningitidis serogroup B (strain ATCC BAA-335 / MC58).